The following is a 277-amino-acid chain: Reaction center protein L chain (277 aa).

A run of 3 helical transmembrane segments spans residues 30–52 (FYVGIFGVMTVFFALIGIALIAW), 84–106 (GGIWQWVSICATGAFVTWALREV), and 113–135 (GIGFHVPFAFSFAIFAYVTLVVI). Residues His-154 and His-174 each coordinate (7R,8Z)-bacteriochlorophyll b. Residues 173-195 (AHMIAITFFFTTCLALALHGGLV) traverse the membrane as a helical segment. His-191 serves as a coordination point for Fe cation. Phe-217 is a binding site for a ubiquinone. A Fe cation-binding site is contributed by His-231. The chain crosses the membrane as a helical span at residues 233–255 (LGLFLALSAVFFSAVCMIISGPV).

It belongs to the reaction center PufL/M/PsbA/D family. In terms of assembly, reaction center is composed of four bacteriochlorophylls, two bacteriopheophytins, two ubiquinones, one iron, and three highly hydrophobic polypeptide chains (designated L, M, and H).

It localises to the cellular chromatophore membrane. The reaction center is a membrane-bound complex that mediates the initial photochemical event in the electron transfer process of photosynthesis. The chain is Reaction center protein L chain (pufL) from Rhodopseudomonas palustris (strain ATCC BAA-98 / CGA009).